The chain runs to 314 residues: Probable cell division protein WhiA (314 aa).

The segment at residues 274 to 308 (SLKELGEMVSTGPISKSGVNHRLRKLNDLADKIRN) is a DNA-binding region (H-T-H motif).

It belongs to the WhiA family.

Functionally, involved in cell division and chromosome segregation. In Staphylococcus aureus (strain Mu3 / ATCC 700698), this protein is Probable cell division protein WhiA.